The following is a 315-amino-acid chain: Protein sprouty homolog 2 (315 aa).

Polar residues predominate over residues 1-14; sequence MEARAQSGSGSQPL. Disordered regions lie at residues 1–38 and 51–140; these read MEAR…PQQV and NTNE…GSSF. Positions 20–32 are enriched in basic and acidic residues; that stretch reads DSGRQRGEPDPRD. Residues 88–100 show a composition bias toward pro residues; sequence PRQPSRPQHPPAH. Residues 109 to 140 are compositionally biased toward low complexity; that stretch reads RSISTVSSGSRSSTRTSTSSSSSEQRLLGSSF. The required for interaction with CAV1 stretch occupies residues 118–315; sequence SRSSTRTSTS…VPPRNFEKPT (198 aa). The SPR domain occupies 177 to 291; sequence KCEDCGKCKC…CYDRVNRPGC (115 aa). The tract at residues 178-315 is required for interaction with TESK1; sequence CEDCGKCKCK…VPPRNFEKPT (138 aa).

The protein belongs to the sprouty family. Forms heterodimers with SPRY1. Forms a tripartite complex containing GAB1, METTL13 and SPRY2. Within the complex interacts with METTL13. Interacts with RAF1. Interacts (via C-terminus) with TESK1 (via C-terminus); the interaction disrupts SPRY2 interaction with GRB2, potentially via disruption of SPRY2 serine dephosphorylation. Interacts with PPP2R1A/PP2A-A and PPP2CA/PP2A-C; the interaction with PPP2CA/PP2A-C is inhibited by interaction with TESK1, possibly by vesicular sequestration of SPRY2. Inhibition of the interaction with the serine/threonine-protein phosphatase 2A (PP2A) holoenzyme results in loss of PP2A-mediated dephosphorylation, resulting in the loss of SPRY2 interaction with GRB2. Interacts with GRB2. Interacts with CBL/C-CBL; the interaction inhibits CBL-mediated ubiquitination of EGFR. Interacts (via C-terminus) with CAV1 (via C-terminus). Post-translationally, cleaved at Pro-144 by the prolyl endopeptidase FAP (seprase) activity (in vitro).

The protein localises to the cytoplasm. The protein resides in the cytoskeleton. It localises to the cell projection. Its subcellular location is the ruffle membrane. Antagonist of fibroblast growth factor (FGF) pathways via inhibition of FGF-mediated phosphorylation of ERK1/2. Thereby acts as an antagonist of FGF-induced retinal lens fiber differentiation, may inhibit limb bud outgrowth and may negatively modulate respiratory organogenesis. Inhibits TGFB-induced epithelial-to-mesenchymal transition in retinal lens epithelial cells. Inhibits CBL/C-CBL-mediated EGFR ubiquitination. The protein is Protein sprouty homolog 2 (SPRY2) of Bos taurus (Bovine).